The primary structure comprises 139 residues: Tetra-peptide repeat homeobox-like protein (139 aa).

Disordered regions lie at residues 1–22 and 78–139; these read MQDP…RQRQ and ERWF…QQPQ. The homeobox DNA-binding region spans 20-79; the sequence is QRQDRTIYNWKQQEVLENHFKEEQYPDYDTRQELAEMLNLREYQVQVWFKNRRAKRSRER. A compositionally biased stretch (low complexity) spans 82–139; sequence QKQLQQLQKHPQQQHPQQQHPQQQLQQQQPQQQPQQQQPQQQPQQQQPQQQQLHQQPQ.

This sequence belongs to the paired homeobox family.

The protein localises to the nucleus. Functionally, transcription factor required for zygotic genome activation (ZGA), a critical event in early embryonic development during which the developmental control passes from maternally provided mRNAs to the expression of the zygotic genome after fertilization. Protein produced from maternal transcripts that binds and activates expression of key ZGA marker genes, such as NANOGNB, ZSCAN4, DUXB, KLF5 and DPPA3. Binds to regulatory DNA sequences containing a 5'-TAATCC-3' sequence motif. This chain is Tetra-peptide repeat homeobox-like protein, found in Homo sapiens (Human).